The chain runs to 387 residues: Galactokinase (387 aa).

36-39 (EHTD) contacts substrate. Residues S70 and 125–131 (GAGLSSS) contribute to the ATP site. Positions 131 and 163 each coordinate Mg(2+). The active-site Proton acceptor is D175. Y227 serves as a coordination point for substrate.

It belongs to the GHMP kinase family. GalK subfamily.

It is found in the cytoplasm. The enzyme catalyses alpha-D-galactose + ATP = alpha-D-galactose 1-phosphate + ADP + H(+). It participates in carbohydrate metabolism; galactose metabolism. In terms of biological role, catalyzes the transfer of the gamma-phosphate of ATP to D-galactose to form alpha-D-galactose-1-phosphate (Gal-1-P). The chain is Galactokinase from Streptomyces coelicolor (strain ATCC BAA-471 / A3(2) / M145).